Here is a 165-residue protein sequence, read N- to C-terminus: Nucleotide-binding protein TGRD_519 (165 aa).

It belongs to the YajQ family.

Nucleotide-binding protein. This Endomicrobium trichonymphae protein is Nucleotide-binding protein TGRD_519.